The primary structure comprises 386 residues: Formate-dependent phosphoribosylglycinamide formyltransferase (386 aa).

N(1)-(5-phospho-beta-D-ribosyl)glycinamide-binding positions include 15-16 (EL) and E75. ATP is bound by residues R107, K148, 153-158 (SSGKGQ), 188-191 (EQFI), and E196. The 190-residue stretch at 112-301 (ALAAQQLNLQ…EFELHLRAIV (190 aa)) folds into the ATP-grasp domain. Residues E260 and E272 each contribute to the Mg(2+) site. N(1)-(5-phospho-beta-D-ribosyl)glycinamide contacts are provided by residues D279, K349, and 356-357 (RR).

This sequence belongs to the PurK/PurT family. As to quaternary structure, homodimer.

The catalysed reaction is N(1)-(5-phospho-beta-D-ribosyl)glycinamide + formate + ATP = N(2)-formyl-N(1)-(5-phospho-beta-D-ribosyl)glycinamide + ADP + phosphate + H(+). Its pathway is purine metabolism; IMP biosynthesis via de novo pathway; N(2)-formyl-N(1)-(5-phospho-D-ribosyl)glycinamide from N(1)-(5-phospho-D-ribosyl)glycinamide (formate route): step 1/1. Its function is as follows. Involved in the de novo purine biosynthesis. Catalyzes the transfer of formate to 5-phospho-ribosyl-glycinamide (GAR), producing 5-phospho-ribosyl-N-formylglycinamide (FGAR). Formate is provided by PurU via hydrolysis of 10-formyl-tetrahydrofolate. The sequence is that of Formate-dependent phosphoribosylglycinamide formyltransferase from Francisella tularensis subsp. tularensis (strain WY96-3418).